The chain runs to 429 residues: Histidine--tRNA ligase (429 aa).

The protein belongs to the class-II aminoacyl-tRNA synthetase family. Homodimer.

It localises to the cytoplasm. It catalyses the reaction tRNA(His) + L-histidine + ATP = L-histidyl-tRNA(His) + AMP + diphosphate + H(+). The chain is Histidine--tRNA ligase from Rippkaea orientalis (strain PCC 8801 / RF-1) (Cyanothece sp. (strain PCC 8801)).